Here is a 514-residue protein sequence, read N- to C-terminus: Na(+)/H(+) antiporter NhaB (514 aa).

12 helical membrane-spanning segments follow: residues 23–43 (LALL…PFIA), 63–83 (PLLP…TSAA), 97–117 (LLLM…LFIF), 120–140 (LLLS…AAAF), 144–164 (FLDA…FYGI), 202–222 (LMMH…VGEP), 238–258 (FFLR…LTCM), 303–323 (AIIG…VGLI), 357–377 (LTVF…APII), 391–411 (LFYL…VGTI), 447–467 (ATPN…APLI), and 475–495 (VWMA…CVEF).

The protein belongs to the NhaB Na(+)/H(+) (TC 2.A.34) antiporter family.

Its subcellular location is the cell inner membrane. It carries out the reaction 2 Na(+)(in) + 3 H(+)(out) = 2 Na(+)(out) + 3 H(+)(in). Na(+)/H(+) antiporter that extrudes sodium in exchange for external protons. This is Na(+)/H(+) antiporter NhaB from Salmonella paratyphi B (strain ATCC BAA-1250 / SPB7).